We begin with the raw amino-acid sequence, 249 residues long: Large ribosomal subunit protein uL22m (249 aa).

Residues 1 to 22 (MKYINQFMKISKGFLVPSSTIG) constitute a mitochondrion transit peptide. The segment at 70 to 98 (ANQKDDSNRQQKEERVKERPRSRISFKKQ) is disordered. The span at 72-98 (QKDDSNRQQKEERVKERPRSRISFKKQ) shows a compositional bias: basic and acidic residues.

Belongs to the universal ribosomal protein uL22 family. In terms of assembly, component of the mitochondrial large ribosomal subunit (mt-LSU). Mature yeast 74S mitochondrial ribosomes consist of a small (37S) and a large (54S) subunit. The 37S small subunit contains a 15S ribosomal RNA (15S mt-rRNA) and at least 32 different proteins. The 54S large subunit contains a 21S rRNA (21S mt-rRNA) and at least 45 different proteins. uL22m forms the wall of the exit tunnel.

The protein resides in the mitochondrion. In terms of biological role, component of the mitochondrial ribosome (mitoribosome), a dedicated translation machinery responsible for the synthesis of mitochondrial genome-encoded proteins, including at least some of the essential transmembrane subunits of the mitochondrial respiratory chain. The mitoribosomes are attached to the mitochondrial inner membrane and translation products are cotranslationally integrated into the membrane. The chain is Large ribosomal subunit protein uL22m (mrpl22) from Schizosaccharomyces pombe (strain 972 / ATCC 24843) (Fission yeast).